The following is a 311-amino-acid chain: Ribosomal protein L11 methyltransferase (311 aa).

The S-adenosyl-L-methionine site is built by T162, G183, D205, and N248.

The protein belongs to the methyltransferase superfamily. PrmA family.

Its subcellular location is the cytoplasm. It carries out the reaction L-lysyl-[protein] + 3 S-adenosyl-L-methionine = N(6),N(6),N(6)-trimethyl-L-lysyl-[protein] + 3 S-adenosyl-L-homocysteine + 3 H(+). In terms of biological role, methylates ribosomal protein L11. The polypeptide is Ribosomal protein L11 methyltransferase (Bacillus licheniformis (strain ATCC 14580 / DSM 13 / JCM 2505 / CCUG 7422 / NBRC 12200 / NCIMB 9375 / NCTC 10341 / NRRL NRS-1264 / Gibson 46)).